Here is a 165-residue protein sequence, read N- to C-terminus: Chorismate pyruvate-lyase (165 aa).

Residues Met-35, Arg-77, Leu-115, and Glu-156 each contribute to the substrate site.

Belongs to the UbiC family. As to quaternary structure, monomer.

The protein resides in the cytoplasm. It carries out the reaction chorismate = 4-hydroxybenzoate + pyruvate. It participates in cofactor biosynthesis; ubiquinone biosynthesis. Functionally, removes the pyruvyl group from chorismate, with concomitant aromatization of the ring, to provide 4-hydroxybenzoate (4HB) for the ubiquinone pathway. The polypeptide is Chorismate pyruvate-lyase (Salmonella schwarzengrund (strain CVM19633)).